A 271-amino-acid polypeptide reads, in one-letter code: Phosphate import ATP-binding protein PstB (271 aa).

Residues 24–266 form the ABC transporter domain; the sequence is MIGKDVSVYY…PDDQRTQDYI (243 aa). Position 56–63 (56–63) interacts with ATP; the sequence is GPSGCGKS.

This sequence belongs to the ABC transporter superfamily. Phosphate importer (TC 3.A.1.7) family. In terms of assembly, the complex is composed of two ATP-binding proteins (PstB), two transmembrane proteins (PstC and PstA) and a solute-binding protein (PstS).

It is found in the cell inner membrane. It catalyses the reaction phosphate(out) + ATP + H2O = ADP + 2 phosphate(in) + H(+). Part of the ABC transporter complex PstSACB involved in phosphate import. Responsible for energy coupling to the transport system. The protein is Phosphate import ATP-binding protein PstB of Agrobacterium fabrum (strain C58 / ATCC 33970) (Agrobacterium tumefaciens (strain C58)).